The sequence spans 391 residues: Carbamoyl phosphate synthase small chain (391 aa).

Residues 1–202 (MTQPAILVLE…AHASAGSGEE (202 aa)) are CPSase. L-glutamine is bound by residues Ser47, Gly254, and Gly256. Residues 206 to 391 (KVVAYDYGVK…RFVDLMAARA (186 aa)) enclose the Glutamine amidotransferase type-1 domain. Cys282 (nucleophile) is an active-site residue. Positions 283, 286, 324, 326, and 327 each coordinate L-glutamine. Active-site residues include His366 and Glu368.

The protein belongs to the CarA family. Composed of two chains; the small (or glutamine) chain promotes the hydrolysis of glutamine to ammonia, which is used by the large (or ammonia) chain to synthesize carbamoyl phosphate. Tetramer of heterodimers (alpha,beta)4.

The catalysed reaction is hydrogencarbonate + L-glutamine + 2 ATP + H2O = carbamoyl phosphate + L-glutamate + 2 ADP + phosphate + 2 H(+). The enzyme catalyses L-glutamine + H2O = L-glutamate + NH4(+). It functions in the pathway amino-acid biosynthesis; L-arginine biosynthesis; carbamoyl phosphate from bicarbonate: step 1/1. The protein operates within pyrimidine metabolism; UMP biosynthesis via de novo pathway; (S)-dihydroorotate from bicarbonate: step 1/3. Small subunit of the glutamine-dependent carbamoyl phosphate synthetase (CPSase). CPSase catalyzes the formation of carbamoyl phosphate from the ammonia moiety of glutamine, carbonate, and phosphate donated by ATP, constituting the first step of 2 biosynthetic pathways, one leading to arginine and/or urea and the other to pyrimidine nucleotides. The small subunit (glutamine amidotransferase) binds and cleaves glutamine to supply the large subunit with the substrate ammonia. In Xanthomonas axonopodis pv. citri (strain 306), this protein is Carbamoyl phosphate synthase small chain.